We begin with the raw amino-acid sequence, 504 residues long: Porphyrin biosynthesis protein HemD (504 aa).

Residues 1-248 are uroporphyrinogen-III C-methyltransferase; the sequence is MEHGFVALVG…LSEKFSWFMK (248 aa). Residues 249 to 504 are uroporphyrinogen-III synthase; the sequence is KPLFGTKILV…LEIGGGNIYD (256 aa).

This sequence in the N-terminal section; belongs to the precorrin methyltransferase family. It in the C-terminal section; belongs to the uroporphyrinogen-III synthase family.

The enzyme catalyses uroporphyrinogen III + 2 S-adenosyl-L-methionine = precorrin-2 + 2 S-adenosyl-L-homocysteine + H(+). The catalysed reaction is hydroxymethylbilane = uroporphyrinogen III + H2O. It participates in cofactor biosynthesis; adenosylcobalamin biosynthesis; precorrin-2 from uroporphyrinogen III: step 1/1. Its pathway is porphyrin-containing compound metabolism; siroheme biosynthesis; precorrin-2 from uroporphyrinogen III: step 1/1. May catalyze sequential reactions to synthesize uroporphyrinogen III from hydroxymethylbilane (HMB) and then precorrin-2, which are intermediate compounds in both vitamin B12 and siroheme biosyntheses. This Ruminiclostridium josui (Clostridium josui) protein is Porphyrin biosynthesis protein HemD (hemD).